The following is a 137-amino-acid chain: LVAVCVSLLGAANIPPQPLNLKQFKNMIQCAGTRTWTSYIGYGCYCGYGGSGTPVDELDRCCYTHDHCYNKAANIPGCNPLIKTYSYTCTKPNITCNDTSDSCARFICDCDRTAAICFASAPYNINNIMISASTSCQ.

Positions 1–11 (LVAVCVSLLGA) are cleaved as a signal peptide. The propeptide occupies 12–19 (ANIPPQPL). 7 disulfide bridges follow: cysteine 30–cysteine 89, cysteine 44–cysteine 136, cysteine 46–cysteine 62, cysteine 61–cysteine 117, cysteine 68–cysteine 110, cysteine 78–cysteine 103, and cysteine 96–cysteine 108. Ca(2+)-binding residues include tyrosine 45 and glycine 47. Tyrosine 48 serves as a coordination point for alpha-D-mannopyranose. Glycine 49 is a Ca(2+) binding site. Residue histidine 65 is part of the active site. Aspartate 66 is a binding site for Ca(2+). Alpha-D-mannopyranose is bound at residue aspartate 66. Aspartate 111 is a catalytic residue.

This sequence belongs to the phospholipase A2 family. Group I subfamily. D49 sub-subfamily. In terms of assembly, homodimer; non-covalently linked. Ca(2+) serves as cofactor. In terms of processing, homodimerization and interaction of the catalytically important Asp-49 (here Asp-111) with mannose molecules may render this protein inactive. Expressed by the venom gland.

The protein resides in the secreted. The catalysed reaction is a 1,2-diacyl-sn-glycero-3-phosphocholine + H2O = a 1-acyl-sn-glycero-3-phosphocholine + a fatty acid + H(+). Snake venom phospholipase A2 (PLA2) that shows anticoagulant and neurotoxic activities. Its function is as follows. PLA2 catalyzes the calcium-dependent hydrolysis of the 2-acyl groups in 3-sn-phosphoglycerides. This chain is Basic phospholipase A2 2, found in Bungarus caeruleus (Indian krait).